The primary structure comprises 614 residues: MDELSDEELAQFCQIANLAYRAGKPIISDQDYDFIYLDALKNRDPDNLLFKFIETEGQSFSEEKVLLPEAMLSIDKAYSWDEISKWIKRLEKSAMQISLDLSAIQIKATPKLDGFSGFDDGSRLYTRGDGKKGSDISRVFERGLCVFNDAERGLGAGEIVIKKSYFKKYLAHSFEYPRNFQASLIKEKALDEQAQKAIIDKAALFIPFIKLPTWSGLVAELVAKFDQIVAQVLVMVDFDVDGVVFEAINTDLKTQMGANRKFHRWQIAFKENKDKAHVKVLNVIPQVGRSGKITPVVELEPTLLSGATIMRATGHNYGLVKEQGLGVGSVVELTRSGLVIPKIIFVLKPMPVDIPDNCPSCDKPLVWKSDFLTCINHKNCPAQIIGKMAYFFKILANNDGFGIATIEKLYAHDIRSVSQIYALNIEDLVTIGFGEKTSMNLINQLNRSVSEQVEDWRFLAAFGMHRMGLGNCENLLKSHHLNDIFDLNLKEIANIDGFAELTGQIIVQGLISIADEFNHIYQYGFNLETTILTKDLQTLTHELFDKKIVFTGKMNHSRDDMKKHAKSIGIKVSTSISAKIDYLVIGDKVGQKKIKDAEKFGVVVMTETDYLSKI.

Residues 29 to 33 and 73 to 74 contribute to the NAD(+) site; these read DQDYD and SI. The active-site N6-AMP-lysine intermediate is Lys111. Arg127, Glu158, and Lys270 together coordinate NAD(+). 4 residues coordinate Zn(2+): Cys358, Cys361, Cys374, and Cys380. Residues 538–614 form the BRCT domain; sequence TLTHELFDKK…MTETDYLSKI (77 aa).

This sequence belongs to the NAD-dependent DNA ligase family. LigA subfamily. Requires Mg(2+) as cofactor. The cofactor is Mn(2+).

The enzyme catalyses NAD(+) + (deoxyribonucleotide)n-3'-hydroxyl + 5'-phospho-(deoxyribonucleotide)m = (deoxyribonucleotide)n+m + AMP + beta-nicotinamide D-nucleotide.. Its function is as follows. DNA ligase that catalyzes the formation of phosphodiester linkages between 5'-phosphoryl and 3'-hydroxyl groups in double-stranded DNA using NAD as a coenzyme and as the energy source for the reaction. It is essential for DNA replication and repair of damaged DNA. The protein is DNA ligase of Ruthia magnifica subsp. Calyptogena magnifica.